A 206-amino-acid chain; its full sequence is Small ribosomal subunit protein uS4A (206 aa).

Residues 98–163 enclose the S4 RNA-binding domain; it reads MRLDNVVYRL…SERFKMFAEN (66 aa).

The protein belongs to the universal ribosomal protein uS4 family. In terms of assembly, part of the 30S ribosomal subunit. Contacts protein S5. The interaction surface between S4 and S5 is involved in control of translational fidelity.

One of the primary rRNA binding proteins, it binds directly to 16S rRNA where it nucleates assembly of the body of the 30S subunit. In terms of biological role, with S5 and S12 plays an important role in translational accuracy. In Clostridium perfringens (strain SM101 / Type A), this protein is Small ribosomal subunit protein uS4A.